Here is a 1905-residue protein sequence, read N- to C-terminus: Bromodomain adjacent to zinc finger domain protein 2A (1905 aa).

Disordered regions lie at residues 1-59 (MEME…NGLS) and 362-434 (TSIF…PTTS). Composition is skewed to polar residues over residues 35-59 (TNGS…NGLS), 379-391 (LQDN…NGSD), and 399-420 (TQSS…STIQ). At T507 the chain carries Phosphothreonine. S509 carries the post-translational modification Phosphoserine. The MBD domain occupies 546–617 (IATPEEVRLP…EHFSFSPRMP (72 aa)). T548 bears the Phosphothreonine mark. S613 carries the phosphoserine modification. The tract at residues 648–792 (ITGKRGRPRN…KEKEEVTKAK (145 aa)) is disordered. 2 DNA-binding regions (a.T hook) span residues 649–661 (TGKR…TEKA) and 670–682 (KRGR…VKIT). A compositionally biased stretch (basic and acidic residues) spans 656–668 (RNTEKAKTKEVPK). The span at 669–678 (VKRGRGRPPK) shows a compositional bias: basic residues. K680 carries the post-translational modification N6-acetyllysine; by KAT8. The span at 686–709 (NKTDNRPLKKLEAQETLNEEDKAK) shows a compositional bias: basic and acidic residues. Residues 693-792 (LKKLEAQETL…KEKEEVTKAK (100 aa)) are a coiled coil. A compositionally biased stretch (basic residues) spans 710–721 (IAKSKKKMRQKV). Polar residues predominate over residues 725-734 (ECQTTIQGQA). Basic and acidic residues-rich tracts occupy residues 739–748 (KQETKSLKQK) and 756–792 (AEKE…TKAK). K799 carries the post-translational modification N6-acetyllysine. The 66-residue stretch at 848–913 (SGAFSDCLTI…LKAALHDPGF (66 aa)) folds into the DDT domain. Residue K866 forms a Glycyl lysine isopeptide (Lys-Gly) (interchain with G-Cter in SUMO2) linkage. S1051 bears the Phosphoserine mark. Residues K1150 and K1172 each participate in a glycyl lysine isopeptide (Lys-Gly) (interchain with G-Cter in SUMO2) cross-link. Disordered regions lie at residues 1178–1220 (SNTT…PQAQ), 1283–1318 (LSSS…SSPD), and 1330–1412 (MPCN…RPPS). Position 1184 is a phosphoserine (S1184). Positions 1186–1198 (ARARGRPRKTKPG) form a DNA-binding region, a.T hook 3. Residues 1283-1293 (LSSSVLTPDSS) are compositionally biased toward low complexity. A compositionally biased stretch (acidic residues) spans 1306–1315 (EEPEPDEAES). The segment covering 1345–1359 (DQPTPSPQQLASSKP) has biased composition (polar residues). At S1397 the chain carries Phosphoserine. A DNA-binding region (a.T hook 4) is located at residues 1404-1416 (PKRRGRPPSKFFK). S1559 bears the Phosphoserine mark. Residues K1676 and K1709 each participate in a glycyl lysine isopeptide (Lys-Gly) (interchain with G-Cter in SUMO2) cross-link. The segment at 1676-1726 (KVTCLVCRKGDNDEFLLLCDGCDRGCHIYCHRPKMEAVPEGDWFCTVCLAQ) adopts a PHD-type zinc-finger fold. Disordered stretches follow at residues 1734–1755 (QKPG…NFSE) and 1769–1789 (ESPA…KRRR). Phosphoserine occurs at positions 1747, 1770, 1783, and 1785. A Bromo domain is found at 1793-1897 (RNHHSDLTFC…RFFESRWEEF (105 aa)).

It belongs to the WAL family. As to quaternary structure, component of the NoRC-1 ISWI chromatin remodeling complex at least composed of SMARCA1 and BAZ2A/TIP5, which regulates the spacing of histone octamers on the DNA template to facilitate access to DNA. Within the NoRC-1 ISWI chromatin remodeling complex interacts with SMARCA1; the interaction is direct. Component of the NoRC-5 ISWI chromatin remodeling complex (also called the NoRC nucleolar-remodeling complex), at least composed of SMARCA5/SNF2H and BAZ2A/TIP5, which regulates the spacing of histone octamers on the DNA template to facilitate access to DNA. Within the NoRC-5 ISWI chromatin remodeling complexes interacts with SMARCA5/SNF2H; the interaction is direct. Interacts with TTF1; the interaction is required for recruitment of the NoRC-5 ISWI chromatin remodeling complex to rDNA. Interacts with HDAC1. Interacts with SIN3A. Interacts with DNMT1 and DNM3B. Interacts with BEND3 and USP21. In terms of processing, acetylation at Lys-680 by KAT8/MOF promotes its dissociation from pRNA, affecting heterochromatin formation, nucleosome positioning and rDNA silencing. Deacetylation by SIRT1 in late S phase enhances pRNA-binding, allowing de novo DNA methylation and heterochromatin formation. Acetylation is high during S phase and declines to background levels in late S phase when the silent copies of rRNA genes are replicated. Ubiquitinated. Deubiquitinated by USP21 leading to its stabilization. In terms of tissue distribution, expressed at moderate levels in most tissues analyzed, including heart, brain, placenta, lung, skeletal muscle, kidney and pancreas.

The protein resides in the nucleus. It localises to the nucleolus. Its function is as follows. Regulatory subunit of the ATP-dependent NoRC-1 and NoRC-5 ISWI chromatin remodeling complexes, which form ordered nucleosome arrays on chromatin and facilitate access to DNA during DNA-templated processes such as DNA replication, transcription, and repair. Both complexes regulate the spacing of nucleosomes along the chromatin and have the ability to slide mononucleosomes to the center of a DNA template. Directly stimulates the ATPase activity of SMARCA5 in the NoRC-5 ISWI chromatin remodeling complex. The NoRC-1 ISWI chromatin remodeling complex has a lower ATP hydrolysis rate than the NoRC-5 ISWI chromatin remodeling complex. Within the NoRC-5 ISWI chromatin remodeling complex, mediates silencing of a fraction of rDNA by recruiting histone-modifying enzymes and DNA methyltransferases, leading to heterochromatin formation and transcriptional silencing. In the complex, it plays a central role by being recruited to rDNA and by targeting chromatin modifying enzymes such as HDAC1, leading to repress RNA polymerase I transcription. Recruited to rDNA via its interaction with TTF1 and its ability to recognize and bind histone H4 acetylated on 'Lys-16' (H4K16ac), leading to deacetylation of H4K5ac, H4K8ac, H4K12ac but not H4K16ac. Specifically binds pRNAs, 150-250 nucleotide RNAs that are complementary in sequence to the rDNA promoter; pRNA-binding is required for heterochromatin formation and rDNA silencing. This Homo sapiens (Human) protein is Bromodomain adjacent to zinc finger domain protein 2A (BAZ2A).